The following is an 88-amino-acid chain: MATSRLPPATLTLKQFMRRQQVLLLYRRILQAIRQVPNDSDRKYLKDWAREEFKRNKSATEEDTIRMMITQGNMQLKELEKTLALARS.

The N-terminal 19 residues, 1–19 (MATSRLPPATLTLKQFMRR), are a transit peptide targeting the mitochondrion.

Belongs to the complex I LYR family.

The protein resides in the mitochondrion. Involved in efficient integration of the N-module into mitochondrial respiratory chain complex I. The sequence is that of LYR motif-containing protein 2 (LYRM2) from Bos taurus (Bovine).